Consider the following 476-residue polypeptide: MHLFINMIFLINIVFIISIIFIERRNPQTTWAWILILTFLPILGFIIYILFGQNITREKNFKRKILDDKTKQKYLNSFKSHYKLDNISLKYKDLIMMNFNNDNSTYTQRNDIDLYFDANSLFEEMIDEINKAEKFIHMEFYIFKSDEIGKKILQALTKKAKEGVEVKLLVDSIGNSIHKKDIDKLKAAGGDFKIFFPGFCKYINLRINYRNHRKILIIDSKVAFLGGFNIGDEYLGKDKNIGHWRDTHTKIKGLAINDLEGRFLLDWSYANESDLDIDLKKYFINPHSTDLPKKIIGAQIVSSGPDHTEQQIKNGYFKIINSAKKNLFIQTPYFVPDEPMLEALRLAALSGVDVKIMLPGNPDHKFMGWIANSYFESLLNAGAKIYLYEKGFLHAKTIVADSSICSVGTANMDIRSFSLNFESNIFIYNEAISKSMEEQFFKDLKVCTKVTLESFEKRSIISRIGESIIRLVSPLM.

The next 2 membrane-spanning stretches (helical) occupy residues His-2 to Ile-22 and Trp-31 to Phe-51. 2 consecutive PLD phosphodiesterase domains span residues Ile-207 to Tyr-234 and Glu-389 to Ser-416. Residues His-212, Lys-214, Asp-219, His-394, Lys-396, and Asp-401 contribute to the active site.

This sequence belongs to the phospholipase D family. Cardiolipin synthase subfamily.

It is found in the cell membrane. It catalyses the reaction 2 a 1,2-diacyl-sn-glycero-3-phospho-(1'-sn-glycerol) = a cardiolipin + glycerol. Catalyzes the reversible phosphatidyl group transfer from one phosphatidylglycerol molecule to another to form cardiolipin (CL) (diphosphatidylglycerol) and glycerol. In Clostridium perfringens (strain ATCC 13124 / DSM 756 / JCM 1290 / NCIMB 6125 / NCTC 8237 / Type A), this protein is Cardiolipin synthase (cls).